Consider the following 151-residue polypeptide: Protein archease-like (151 aa).

Residues Asp20, Asp150, and Ile151 each coordinate Ca(2+).

Belongs to the archease family.

Its function is as follows. Component of the tRNA-splicing ligase complex required to facilitate the enzymatic turnover of catalytic subunit RtcB. The polypeptide is Protein archease-like (Dictyostelium discoideum (Social amoeba)).